Reading from the N-terminus, the 197-residue chain is Rac-like GTP-binding protein ARAC6 (197 aa).

A GTP-binding site is contributed by 13 to 20 (GDGAVGKT). An Effector region motif is present at residues 35–43 (YVPTVFDNF). GTP is bound by residues 60–64 (DTAGQ) and 118–121 (TKLD). S160 is a GDP binding site. The residue at position 194 (C194) is a Cysteine methyl ester. C194 carries the S-geranylgeranyl cysteine lipid modification. Positions 195-197 (SIL) are cleaved as a propeptide — removed in mature form.

It belongs to the small GTPase superfamily. Rho family. As to quaternary structure, interacts with SPK1. As to expression, ubiquitous. Preferentially expressed in mature pollen and pollen tubes.

It is found in the cytoplasm. The protein localises to the membrane. May be involved in cell polarity control during the actin-dependent tip growth of pollen tubes. Its function is as follows. Inactive GDP-bound Rho GTPases reside in the cytosol, are found in a complex with Rho GDP-dissociation inhibitors (Rho GDIs), and are released from the GDI protein in order to translocate to membranes upon activation. The polypeptide is Rac-like GTP-binding protein ARAC6 (ARAC6) (Arabidopsis thaliana (Mouse-ear cress)).